The sequence spans 272 residues: Imidazole glycerol phosphate synthase subunit HisF (272 aa).

Catalysis depends on residues D11 and D130.

This sequence belongs to the HisA/HisF family. Heterodimer of HisH and HisF.

Its subcellular location is the cytoplasm. The enzyme catalyses 5-[(5-phospho-1-deoxy-D-ribulos-1-ylimino)methylamino]-1-(5-phospho-beta-D-ribosyl)imidazole-4-carboxamide + L-glutamine = D-erythro-1-(imidazol-4-yl)glycerol 3-phosphate + 5-amino-1-(5-phospho-beta-D-ribosyl)imidazole-4-carboxamide + L-glutamate + H(+). It participates in amino-acid biosynthesis; L-histidine biosynthesis; L-histidine from 5-phospho-alpha-D-ribose 1-diphosphate: step 5/9. Its function is as follows. IGPS catalyzes the conversion of PRFAR and glutamine to IGP, AICAR and glutamate. The HisF subunit catalyzes the cyclization activity that produces IGP and AICAR from PRFAR using the ammonia provided by the HisH subunit. This chain is Imidazole glycerol phosphate synthase subunit HisF, found in Methanococcus maripaludis (strain C6 / ATCC BAA-1332).